The primary structure comprises 186 residues: Elongation factor P (186 aa).

The protein belongs to the elongation factor P family.

It localises to the cytoplasm. Its pathway is protein biosynthesis; polypeptide chain elongation. Its function is as follows. Involved in peptide bond synthesis. Stimulates efficient translation and peptide-bond synthesis on native or reconstituted 70S ribosomes in vitro. Probably functions indirectly by altering the affinity of the ribosome for aminoacyl-tRNA, thus increasing their reactivity as acceptors for peptidyl transferase. The sequence is that of Elongation factor P from Neisseria gonorrhoeae (strain NCCP11945).